The sequence spans 330 residues: mRNA-capping enzyme (330 aa).

The active-site N6-GMP-lysine intermediate is the K82.

Belongs to the eukaryotic GTase family. As to quaternary structure, monomer. It depends on Mg(2+) as a cofactor. The cofactor is Mn(2+).

The enzyme catalyses a 5'-end diphospho-ribonucleoside in mRNA + GTP + H(+) = a 5'-end (5'-triphosphoguanosine)-ribonucleoside in mRNA + diphosphate. MRNA capping. Transfers a GMP cap onto the end of mRNA that terminates with a 5'-diphosphate tail. The protein is mRNA-capping enzyme of Chlorella (PBCV-1).